The following is a 217-amino-acid chain: Probable GTP-binding protein EngB (217 aa).

Residues 37–214 (DGVEIAFAGR…RAAMAKLLEE (178 aa)) form the EngB-type G domain. GTP-binding positions include 45–52 (GRSNVGKS), 72–76 (GRTQE), 92–95 (DMPG), 159–162 (TKAD), and 193–195 (TSS). Residues S52 and T74 each coordinate Mg(2+).

It belongs to the TRAFAC class TrmE-Era-EngA-EngB-Septin-like GTPase superfamily. EngB GTPase family. Requires Mg(2+) as cofactor.

Necessary for normal cell division and for the maintenance of normal septation. The sequence is that of Probable GTP-binding protein EngB from Bradyrhizobium diazoefficiens (strain JCM 10833 / BCRC 13528 / IAM 13628 / NBRC 14792 / USDA 110).